The sequence spans 230 residues: Probable septum site-determining protein MinC (230 aa).

This sequence belongs to the MinC family. As to quaternary structure, interacts with MinD and FtsZ.

In terms of biological role, cell division inhibitor that blocks the formation of polar Z ring septums. Rapidly oscillates between the poles of the cell to destabilize FtsZ filaments that have formed before they mature into polar Z rings. Prevents FtsZ polymerization. The chain is Probable septum site-determining protein MinC from Erwinia tasmaniensis (strain DSM 17950 / CFBP 7177 / CIP 109463 / NCPPB 4357 / Et1/99).